Reading from the N-terminus, the 453-residue chain is HTH-type pyridoxine biosynthesis transcriptional regulator PdxR (453 aa).

One can recognise an HTH gntR-type domain in the interval 15–83; that stretch reads TSIPTQLTEQ…RGSGTTINPD (69 aa). A DNA-binding region (H-T-H motif) is located at residues 43 to 62; sequence SRSLSTQLGVSRGSVVTAYD.

The protein in the C-terminal section; belongs to the class-I pyridoxal-phosphate-dependent aminotransferase family. It depends on pyridoxal 5'-phosphate as a cofactor.

Its function is as follows. May have a regulatory function in pyridoxine biosynthesis. Is said to also have an aminotransferase activity in valine biosynthesis as a double inactivation of ilvE and pdxR results in an auxotrophic requirement for valine. In Corynebacterium glutamicum (strain ATCC 13032 / DSM 20300 / JCM 1318 / BCRC 11384 / CCUG 27702 / LMG 3730 / NBRC 12168 / NCIMB 10025 / NRRL B-2784 / 534), this protein is HTH-type pyridoxine biosynthesis transcriptional regulator PdxR (pdxR).